A 941-amino-acid chain; its full sequence is 26S proteasome regulatory subunit RPN2 (941 aa).

10 PC repeats span residues S363–F396, G400–D437, G442–E476, A477–T511, G513–Y546, G547–R582, A583–R615, G617–Q651, A652–E689, and G695–A731. The segment at K808 to K854 is disordered. The span at K816–K854 shows a compositional bias: basic and acidic residues.

This sequence belongs to the proteasome subunit S1 family.

Acts as a regulatory subunit of the 26S proteasome which is involved in the ATP-dependent degradation of ubiquitinated proteins. The chain is 26S proteasome regulatory subunit RPN2 (RPN2) from Candida glabrata (strain ATCC 2001 / BCRC 20586 / JCM 3761 / NBRC 0622 / NRRL Y-65 / CBS 138) (Yeast).